The chain runs to 394 residues: Elongation factor Tu (394 aa).

The tr-type G domain maps to 10 to 204 (KPHVNVGTIG…AVDEWIPTPE (195 aa)). A G1 region spans residues 19 to 26 (GHIDHGKT). 19 to 26 (GHIDHGKT) is a binding site for GTP. T26 is a binding site for Mg(2+). The G2 stretch occupies residues 60–64 (GITIN). A G3 region spans residues 81–84 (DCPG). GTP is bound by residues 81-85 (DCPGH) and 136-139 (NKCD). Residues 136 to 139 (NKCD) form a G4 region. A G5 region spans residues 174–176 (SAL).

Belongs to the TRAFAC class translation factor GTPase superfamily. Classic translation factor GTPase family. EF-Tu/EF-1A subfamily. Monomer.

Its subcellular location is the cytoplasm. It carries out the reaction GTP + H2O = GDP + phosphate + H(+). Functionally, GTP hydrolase that promotes the GTP-dependent binding of aminoacyl-tRNA to the A-site of ribosomes during protein biosynthesis. In Mycoplasma pneumoniae (strain ATCC 29342 / M129 / Subtype 1) (Mycoplasmoides pneumoniae), this protein is Elongation factor Tu.